The chain runs to 156 residues: MSINATLLGQAISFALFVWFCIKFVWPPLMNAIEERQKKIADGLADAGRAAKDLELAQAKATEQLKEAKVTANEIIEQANKRKAQIVEEAKAEADAERAKIIAQGKAEIENERSRVKDDLRKQVAALAVLGAERILERSIDQAAHSDIVDKLVAEI.

The helical transmembrane segment at 7 to 29 threads the bilayer; sequence LLGQAISFALFVWFCIKFVWPPL.

It belongs to the ATPase B chain family. F-type ATPases have 2 components, F(1) - the catalytic core - and F(0) - the membrane proton channel. F(1) has five subunits: alpha(3), beta(3), gamma(1), delta(1), epsilon(1). F(0) has three main subunits: a(1), b(2) and c(10-14). The alpha and beta chains form an alternating ring which encloses part of the gamma chain. F(1) is attached to F(0) by a central stalk formed by the gamma and epsilon chains, while a peripheral stalk is formed by the delta and b chains.

The protein localises to the cell inner membrane. Functionally, f(1)F(0) ATP synthase produces ATP from ADP in the presence of a proton or sodium gradient. F-type ATPases consist of two structural domains, F(1) containing the extramembraneous catalytic core and F(0) containing the membrane proton channel, linked together by a central stalk and a peripheral stalk. During catalysis, ATP synthesis in the catalytic domain of F(1) is coupled via a rotary mechanism of the central stalk subunits to proton translocation. In terms of biological role, component of the F(0) channel, it forms part of the peripheral stalk, linking F(1) to F(0). The sequence is that of ATP synthase subunit b from Shewanella sp. (strain W3-18-1).